The following is a 174-amino-acid chain: Small ribosomal subunit protein uS5 (174 aa).

The 64-residue stretch at 18–81 folds into the S5 DRBM domain; the sequence is LKDRLVSVNR…EDAKKNLVKI (64 aa).

The protein belongs to the universal ribosomal protein uS5 family. Part of the 30S ribosomal subunit. Contacts proteins S4 and S8.

Functionally, with S4 and S12 plays an important role in translational accuracy. Its function is as follows. Located at the back of the 30S subunit body where it stabilizes the conformation of the head with respect to the body. The polypeptide is Small ribosomal subunit protein uS5 (Flavobacterium psychrophilum (strain ATCC 49511 / DSM 21280 / CIP 103535 / JIP02/86)).